Reading from the N-terminus, the 420-residue chain is Calreticulin (420 aa).

An N-terminal signal peptide occupies residues 1–18 (MKWGVVAVLATLVVAASA). Residues cysteine 106 and cysteine 140 are joined by a disulfide bond. An alpha-D-glucoside contacts are provided by tyrosine 110, lysine 112, tyrosine 131, and aspartate 138. Tandem repeats lie at residues 194-205 (VASGSLYEDWDM), 213-224 (DPKASKPEDWDE), 230-241 (DPEDKKPEGWDD), 248-259 (DKDAKKPEDWDD), 263-273 (GTWEPPMIPNP), 277-287 (GEWKAKMIKNP), and 291-301 (GIWVAPDIDNP). Positions 194 to 259 (VASGSLYEDW…DAKKPEDWDD (66 aa)) are 4 X approximate repeats. A compositionally biased stretch (basic and acidic residues) spans 210–220 (TIKDPKASKPE). The disordered stretch occupies residues 210–272 (TIKDPKASKP…GTWEPPMIPN (63 aa)). A compositionally biased stretch (acidic residues) spans 221 to 230 (DWDEREEIAD). A 3 X approximate repeats region spans residues 263–301 (GTWEPPMIPNPEYKGEWKAKMIKNPAYKGIWVAPDIDNP). Residue glutamate 321 participates in an alpha-D-glucoside binding. Residues 357 to 376 (EEKAMFDKVKKEEDEKKAKD) show a composition bias toward basic and acidic residues. Positions 357–420 (EEKAMFDKVK…EEEESGHDEL (64 aa)) are disordered. 2 stretches are compositionally biased toward acidic residues: residues 385–398 (EAAEEEDDEYEDKE) and 411–420 (EEEESGHDEL). A Prevents secretion from ER motif is present at residues 417–420 (HDEL).

Belongs to the calreticulin family.

Its subcellular location is the endoplasmic reticulum lumen. Functionally, molecular calcium-binding chaperone promoting folding, oligomeric assembly and quality control in the ER via the calreticulin/calnexin cycle. This lectin may interact transiently with almost all of the monoglucosylated glycoproteins that are synthesized in the ER. The protein is Calreticulin of Chlamydomonas reinhardtii (Chlamydomonas smithii).